A 260-amino-acid polypeptide reads, in one-letter code: Carbonic anhydrase 2 (260 aa).

Ser2 is subject to N-acetylserine. Residue Ser2 is modified to Phosphoserine. An Alpha-carbonic anhydrase domain is found at 3 to 259; sequence HHWGYGKHNG…LKNRQVRGFP (257 aa). The active-site Proton donor/acceptor is the His64. Zn(2+) is bound by residues His94, His96, and His119. Phosphoserine occurs at positions 165 and 172. 198–199 is a substrate binding site; sequence TT.

It belongs to the alpha-carbonic anhydrase family. In terms of assembly, interacts with SLC4A4. Interaction with SLC4A7 regulates SLC4A7 transporter activity. It depends on Zn(2+) as a cofactor.

The protein resides in the cytoplasm. Its subcellular location is the cell membrane. It catalyses the reaction hydrogencarbonate + H(+) = CO2 + H2O. The enzyme catalyses urea = cyanamide + H2O. With respect to regulation, inhibited by acetazolamide. Functionally, catalyzes the reversible hydration of carbon dioxide. Can also hydrate cyanamide to urea. Involved in the regulation of fluid secretion into the anterior chamber of the eye. Essential for bone resorption and osteoclast differentiation. Contributes to intracellular pH regulation in the duodenal upper villous epithelium during proton-coupled peptide absorption. Stimulates the chloride-bicarbonate exchange activity of SLC26A6. The sequence is that of Carbonic anhydrase 2 (CA2) from Bos taurus (Bovine).